The chain runs to 117 residues: Non-specific lipid-transfer protein 2 (117 aa).

The first 25 residues, 1–25 (MAGLMKLACLVLACMIVAGPITSNA), serve as a signal peptide directing secretion. Disulfide bonds link C29–C76, C39–C53, C54–C99, and C74–C113.

The protein belongs to the plant LTP family.

Plant non-specific lipid-transfer proteins transfer phospholipids as well as galactolipids across membranes. May play a role in wax or cutin deposition in the cell walls of expanding epidermal cells and certain secretory tissues. This Brassica napus (Rape) protein is Non-specific lipid-transfer protein 2 (LTP2).